The following is a 193-amino-acid chain: Sorting nexin-22 (193 aa).

Residues Met1–Glu21 are disordered. Residues Met1 to Asn118 form the PX domain. Arg43, Ser45, Lys66, and Arg79 together coordinate a 1,2-diacyl-sn-glycero-3-phospho-(1D-myo-inositol-3-phosphate).

This sequence belongs to the sorting nexin family. In terms of assembly, (Microbial infection) Interacts with P.falciparum (strain 3D7) CK1. Expressed in erythrocytes (at protein level).

It localises to the cytoplasmic vesicle membrane. Its function is as follows. May be involved in several stages of intracellular trafficking. Interacts with membranes containing phosphatidylinositol 3-phosphate (PtdIns(3P)). The sequence is that of Sorting nexin-22 (SNX22) from Homo sapiens (Human).